The chain runs to 692 residues: Transforming growth factor beta activator LRRC33 (692 aa).

The N-terminal stretch at 1 to 24 (MEFLPLWLCLGFHFLIVEWRSGRG) is a signal peptide. Residues 25-650 (TATAASQGGC…CKWGQVDTGL (626 aa)) lie on the Extracellular side of the membrane. The 28-residue stretch at 29–56 (ASQGGCKVVDRVADCRSLNLASVPSGLP) folds into the LRRNT domain. LRR repeat units follow at residues 58–79 (HSRMLVLDANPLRVLWNHSLQA), 82–103 (RLEDLSLHSCHLDRISHWAFHE), 106–127 (HLQNLVLADNRLSENYKESATA), 133–155 (RLRRLDLSGNSLTEDMAALMLQN), 158–179 (SLEVVSLARNTLMRLDDSVFEG), 182–203 (RLVELDLQRNYIFEIEGGAFDG), 206–227 (ELRRLNLAYNNLPCIVDFSLTQ), 228–239 (LRFLNVSYNILE), 251–272 (ELEILDLSHNQLLFFPLLPQCG), and 273–294 (KLHTLLLQDNSMGFYRELYNTS). An N-linked (GlcNAc...) asparagine glycan is attached at asparagine 74. N-linked (GlcNAc...) asparagine glycosylation occurs at asparagine 155. A glycan (N-linked (GlcNAc...) asparagine) is linked at asparagine 232. Residues asparagine 292, asparagine 309, and asparagine 312 are each glycosylated (N-linked (GlcNAc...) asparagine). LRR repeat units lie at residues 329–350 (ALRFLDMSQNQLRHLPDGFLKK), 353–374 (SLSHLNLNQNCLTKLHIREHEP), 377–398 (ALTELDLSRNQLAELHLAPGLT), 403–424 (NLRVFNLSSNQLLGVPTGLFHS), 427–448 (SITTLDMSHNQISLCPQTVPLD), 463–484 (SLRSLSLDGCGLKALQDCPFQG), 486–507 (SLTHLDLSSNWGILNGSVSPLS), 512–533 (TLQVLSLRNVGLGSGAAEMDFS), 537–558 (NLRELDLSGNSLTSFPKFKGSS), 559–580 (ALQTLDLRRNSLTALPQRVVSE), and 585–605 (GLQTIYLSQNPYDCCGVEGWG). N-linked (GlcNAc...) asparagine glycosylation occurs at asparagine 408. An N-linked (GlcNAc...) asparagine glycan is attached at asparagine 500. Residues 606 to 643 (ALQHFKTIADLSMVTCNLSSKIIRVVELPEGIPQDCKW) form the LRRCT domain. A glycan (N-linked (GlcNAc...) asparagine) is linked at asparagine 622. The chain crosses the membrane as a helical span at residues 651–671 (FYLVLILPSCLTLLVASTVIF). Topologically, residues 672–692 (LTFKKPLLQVIKSRCHWSSIY) are cytoplasmic.

Belongs to the LRRC32/LRRC33 family. As to quaternary structure, interacts (via LRR repeats) with TLR2, TLR3, TLR4, TLR9 and probably other Toll-like receptors. Interacts with CYBB/NOX2; the interaction is direct. Interacts with TGFB1; associates via disulfide bonds with the Latency-associated peptide chain (LAP) regulatory chain of TGFB1, leading to regulate activation of TGF-beta-1.

The protein localises to the cell membrane. It is found in the endoplasmic reticulum membrane. In terms of biological role, key regulator of transforming growth factor beta-1 (TGFB1) specifically required for microglia function in the nervous system. Required for activation of latent TGF-beta-1 in macrophages and microglia: associates specifically via disulfide bonds with the Latency-associated peptide (LAP), which is the regulatory chain of TGFB1, and regulates integrin-dependent activation of TGF-beta-1. TGF-beta-1 activation mediated by LRRC33/NRROS is highly localized: there is little spreading of TGF-beta-1 activated from one microglial cell to neighboring microglia, suggesting the existence of localized and selective activation of TGF-beta-1 by LRRC33/NRROS. Indirectly plays a role in Toll-like receptor (TLR) signaling: ability to inhibit TLR-mediated NF-kappa-B activation and cytokine production is probably a consequence of its role in TGF-beta-1 signaling. The chain is Transforming growth factor beta activator LRRC33 from Rattus norvegicus (Rat).